We begin with the raw amino-acid sequence, 264 residues long: MLIHPQFDPIAFSVGPLSVRWYGLMYLIAFLLFMTLGRVHARRRPELGWNAQQLDDLLLYGMLGVVLGGRLGEVLFFQPAYYFSHPAEILAIWKGGMSFHGGFLGVLVAMWLYGRRSGKGFWQVTDFIAPLVPTGLAAGRLGNFINGELWGRPVQTDVPWAMVYPWVDALPRHPSQLYQVAGEGLLLFAILWVYSARPRPLKAVSAMFLIGYGVLRFAAEFFRTPDPGIFGTLSLGLSTAQWLCVPMIAVGVGLLASTRTDPAH.

The next 7 membrane-spanning stretches (helical) occupy residues 14-34 (VGPL…LLFM), 57-77 (LLLY…VLFF), 89-109 (ILAI…VLVA), 127-147 (FIAP…FING), 176-196 (QLYQ…VYSA), 202-222 (KAVS…AEFF), and 235-255 (LGLS…VGLL). Arginine 140 lines the a 1,2-diacyl-sn-glycero-3-phospho-(1'-sn-glycerol) pocket.

Belongs to the Lgt family.

The protein resides in the cell inner membrane. The enzyme catalyses L-cysteinyl-[prolipoprotein] + a 1,2-diacyl-sn-glycero-3-phospho-(1'-sn-glycerol) = an S-1,2-diacyl-sn-glyceryl-L-cysteinyl-[prolipoprotein] + sn-glycerol 1-phosphate + H(+). It participates in protein modification; lipoprotein biosynthesis (diacylglyceryl transfer). Functionally, catalyzes the transfer of the diacylglyceryl group from phosphatidylglycerol to the sulfhydryl group of the N-terminal cysteine of a prolipoprotein, the first step in the formation of mature lipoproteins. The sequence is that of Phosphatidylglycerol--prolipoprotein diacylglyceryl transferase from Aromatoleum aromaticum (strain DSM 19018 / LMG 30748 / EbN1) (Azoarcus sp. (strain EbN1)).